The primary structure comprises 214 residues: MRRRRKKGADEKLLSYTKYVLRDDIDKLKGKWNLKFRNDNPIHVEFGTGKGKFITTLAKQNPDINYIAMELKEEVLLKAVEKADASNLNNILFLWGDVSNILDYFEAKELSRIYINFCDPWPKNRWSKRRLTHSGFLEMYNRVLEDDGEIHFKTDNEKLFEFSLNEIAANNWLLKNISLDLGNSEYENNVTTEYEDKFMSQGMRIFRCEAKKRN.

Residues E45, E70, D97, and D119 each coordinate S-adenosyl-L-methionine. The active site involves D119. Residues K123, D155, and 192 to 195 each bind substrate; that span reads TEYE.

The protein belongs to the class I-like SAM-binding methyltransferase superfamily. TrmB family.

The catalysed reaction is guanosine(46) in tRNA + S-adenosyl-L-methionine = N(7)-methylguanosine(46) in tRNA + S-adenosyl-L-homocysteine. The protein operates within tRNA modification; N(7)-methylguanine-tRNA biosynthesis. Functionally, catalyzes the formation of N(7)-methylguanine at position 46 (m7G46) in tRNA. The sequence is that of tRNA (guanine-N(7)-)-methyltransferase from Clostridioides difficile (strain 630) (Peptoclostridium difficile).